Here is a 514-residue protein sequence, read N- to C-terminus: Peptide chain release factor 3 (514 aa).

Residues 8–268 (KKRRTFAIIS…TFLEFAPEPH (261 aa)) enclose the tr-type G domain. Residues 17–24 (SHPDAGKT), 85–89 (DTPGH), and 139–142 (NKLD) contribute to the GTP site.

It belongs to the TRAFAC class translation factor GTPase superfamily. Classic translation factor GTPase family. PrfC subfamily.

Its subcellular location is the cytoplasm. Its function is as follows. Increases the formation of ribosomal termination complexes and stimulates activities of RF-1 and RF-2. It binds guanine nucleotides and has strong preference for UGA stop codons. It may interact directly with the ribosome. The stimulation of RF-1 and RF-2 is significantly reduced by GTP and GDP, but not by GMP. This chain is Peptide chain release factor 3, found in Streptococcus pyogenes serotype M28 (strain MGAS6180).